Reading from the N-terminus, the 540-residue chain is BTB/POZ domain-containing protein 6-A (540 aa).

Residues Ala138–Pro208 form the BTB domain.

As to quaternary structure, interacts with cul3. Interacts (via BTB domain) with zbtb16/plzf. Expressed in the developing central nervous system.

The protein localises to the cytoplasm. Its subcellular location is the nucleus. Adapter protein for the cul3 E3 ubiquitin-protein ligase complex. Promotes the export of zbtb16/plzf from the nucleus to the cytoplasm and targets zbtb16/plzf for ubiquitination and degradation. Up-regulates neurog1 expression and antagonizes zbtb16/plzf, to promote neurogenesis. The sequence is that of BTB/POZ domain-containing protein 6-A (btbd6a) from Danio rerio (Zebrafish).